The sequence spans 950 residues: Bifunctional glutamine synthetase adenylyltransferase/adenylyl-removing enzyme (950 aa).

Positions 1-443 are adenylyl removase; sequence MSLPSPLLPV…VFVTLIGDEE (443 aa). Residues 450 to 950 are adenylyl transferase; it reads ERHFNELWDM…WQEWLESSTI (501 aa).

It belongs to the GlnE family. It depends on Mg(2+) as a cofactor.

The enzyme catalyses [glutamine synthetase]-O(4)-(5'-adenylyl)-L-tyrosine + phosphate = [glutamine synthetase]-L-tyrosine + ADP. It carries out the reaction [glutamine synthetase]-L-tyrosine + ATP = [glutamine synthetase]-O(4)-(5'-adenylyl)-L-tyrosine + diphosphate. Involved in the regulation of glutamine synthetase GlnA, a key enzyme in the process to assimilate ammonia. When cellular nitrogen levels are high, the C-terminal adenylyl transferase (AT) inactivates GlnA by covalent transfer of an adenylyl group from ATP to specific tyrosine residue of GlnA, thus reducing its activity. Conversely, when nitrogen levels are low, the N-terminal adenylyl removase (AR) activates GlnA by removing the adenylyl group by phosphorolysis, increasing its activity. The regulatory region of GlnE binds the signal transduction protein PII (GlnB) which indicates the nitrogen status of the cell. In Vibrio vulnificus (strain YJ016), this protein is Bifunctional glutamine synthetase adenylyltransferase/adenylyl-removing enzyme.